A 409-amino-acid polypeptide reads, in one-letter code: Elongation factor Tu (409 aa).

The 205-residue stretch at 10 to 214 (KPHVNIGTIG…AVDSYIPTPE (205 aa)) folds into the tr-type G domain. A G1 region spans residues 19 to 26 (GHVDHGKT). Residue 19-26 (GHVDHGKT) coordinates GTP. Threonine 26 contacts Mg(2+). The segment at 60 to 64 (GITIN) is G2. A G3 region spans residues 81–84 (DCPG). Residues 81-85 (DCPGH) and 136-139 (NKVD) contribute to the GTP site. Residues 136 to 139 (NKVD) form a G4 region. The G5 stretch occupies residues 174-176 (SGL).

Belongs to the TRAFAC class translation factor GTPase superfamily. Classic translation factor GTPase family. EF-Tu/EF-1A subfamily. In terms of assembly, monomer.

It localises to the cytoplasm. The enzyme catalyses GTP + H2O = GDP + phosphate + H(+). Its function is as follows. GTP hydrolase that promotes the GTP-dependent binding of aminoacyl-tRNA to the A-site of ribosomes during protein biosynthesis. The polypeptide is Elongation factor Tu (Cyanothece sp. (strain PCC 7425 / ATCC 29141)).